Here is a 660-residue protein sequence, read N- to C-terminus: Cysteine--tRNA ligase, cytoplasmic (660 aa).

Over residues 1–10 (MSENSSPKLE) the composition is skewed to polar residues. The segment at 1-20 (MSENSSPKLESTSAAAASTK) is disordered. Zn(2+) is bound at residue cysteine 65. The short motif at 67–77 (PTVYDASHMGH) is the 'HIGH' region element. Positions 256, 281, and 285 each coordinate Zn(2+). The 'KMSKS' region motif lies at 314–318 (KMSKS). Lysine 317 is a binding site for ATP. 2 disordered regions span residues 563–584 (IEKK…KFEK) and 627–660 (QKEY…QSPQ). The segment covering 627-639 (QKEYDNQTKEHNN) has biased composition (basic and acidic residues). Low complexity predominate over residues 643-660 (SLSTSTSSPTLTSTQSPQ).

It belongs to the class-I aminoacyl-tRNA synthetase family. Requires Zn(2+) as cofactor.

It is found in the cytoplasm. It carries out the reaction tRNA(Cys) + L-cysteine + ATP = L-cysteinyl-tRNA(Cys) + AMP + diphosphate. The chain is Cysteine--tRNA ligase, cytoplasmic (cysS) from Dictyostelium discoideum (Social amoeba).